A 576-amino-acid polypeptide reads, in one-letter code: MQPQEVDLMENSTMRNGARVLPPEAISKRHIGPYIIRETLGEGSFGKVKLATHYKTQQKVALKFISRQLLKKSDMHMRVEREISYLKLLRHPHIIKLYDVITTPTDIVMVIEYAGGELFDYIVEKKRMTEDEGRRFFQQIICAIEYCHRHKIVHRDLKPENLLLDDNLNVKIADFGLSNIMTDGNFLKTSCGSPNYAAPEVINGKLYAGPEVDVWSCGIVLYVMLVGRLPFDDEFIPNLFKKVNSCVYVMPDFLSPGAQSLIRRMIVADPMQRITIQEIRRDPWFNVNLPDYLRPMEEVQGSYADSRIVSKLGEAMGFSEDYIVEALRSDENNEVKEAYNLLHENQVIQEKSHLSKSKRVDSFLSVSPPAFSEYTSELQKKSKQELIDPTLEGPRWTVSDPPTYAKQTIDSNICVLVPTAEKNKLEMRTLADAASAVDTSQSTRKKSRRNKWHFGVRCRGDAPEILLAVYRALQRAGAQFTVPKPVNGKYRSDMYTIKSRWEIPHCKREGKNTYAYIELQLYEVMPGCFMLDVKSNGYKDIYSHPERTADHGMDDLKSSFPFLDLCAMLVCKLFSA.

Residues 34 to 285 (YIIRETLGEG…IQEIRRDPWF (252 aa)) enclose the Protein kinase domain. Residues 40–48 (LGEGSFGKV) and K63 each bind ATP. D156 serves as the catalytic Proton acceptor. T189 carries the phosphothreonine modification. The interval 292–348 (YLRPMEEVQGSYADSRIVSKLGEAMGFSEDYIVEALRSDENNEVKEAYNLLHENQVI) is auto-inhibitory domain (AID). One can recognise a UBA domain in the interval 304-345 (ADSRIVSKLGEAMGFSEDYIVEALRSDENNEVKEAYNLLHEN). S442 carries the post-translational modification Phosphoserine.

Belongs to the protein kinase superfamily. CAMK Ser/Thr protein kinase family. SNF1 subfamily. In terms of assembly, component of the AMP-activated protein kinase complex also known as the SNF1 kinase complex (Snf1c), a heterotrimeric complex composed of a catalytic subunit alpha and 2 regulatory subunits beta (amk2) and gamma (cbs2). In terms of processing, phosphorylation at Thr-189 by ssp1 is required for nuclear entry in nutritionally stressed cells.

It is found in the cytoplasm. It localises to the nucleus. The catalysed reaction is L-seryl-[protein] + ATP = O-phospho-L-seryl-[protein] + ADP + H(+). The enzyme catalyses L-threonyl-[protein] + ATP = O-phospho-L-threonyl-[protein] + ADP + H(+). Its function is as follows. Serine/threonine protein kinase essential for release from glucose repression via the phosphorylation of scr1 upon glucose deprivation. Catalytic subunit of the AMP-activated protein kinase complex also known as the SNF1 kinase complex (Snf1c), a central regulator of cellular energy homeostasis, which, in response to a fall in intracellular ATP levels, activates energy-producing pathways and inhibits energy-consuming processes. The complex phosphorylates histone H3 to form H3S10ph, which promotes H3K14ac formation, leading to transcriptional activation through TBP recruitment to the promoters. Regulates proper cell cycle exit and sexual differentiation. Also regulates ste11 levels under nitrogen deprivation. In Schizosaccharomyces pombe (strain 972 / ATCC 24843) (Fission yeast), this protein is SNF1-like protein kinase ssp2.